A 384-amino-acid chain; its full sequence is Odorant receptor 46a, isoform B (384 aa).

Residues methionine 1–arginine 37 are Cytoplasmic-facing. The helical transmembrane segment at phenylalanine 38–asparagine 58 threads the bilayer. Asparagine 59 carries N-linked (GlcNAc...) asparagine glycosylation. At asparagine 59–glutamate 65 the chain is on the extracellular side. The helical transmembrane segment at isoleucine 66 to leucine 86 threads the bilayer. At lysine 87–tyrosine 130 the chain is on the cytoplasmic side. The chain crosses the membrane as a helical span at residues glycine 131–glycine 151. Topologically, residues glutamate 152–glycine 165 are extracellular. A helical membrane pass occupies residues tryptophan 166–leucine 186. Residues asparagine 187 to leucine 247 lie on the Cytoplasmic side of the membrane. Residues valine 248–valine 268 form a helical membrane-spanning segment. Topologically, residues serine 269–aspartate 283 are extracellular. Residues alanine 284–isoleucine 304 traverse the membrane as a helical segment. Over cysteine 305–proline 348 the chain is Cytoplasmic. A helical membrane pass occupies residues methionine 349 to valine 369. Residue asparagine 370 is glycosylated (N-linked (GlcNAc...) asparagine). Topologically, residues asparagine 370–serine 384 are extracellular.

It belongs to the insect chemoreceptor superfamily. Heteromeric odorant receptor channel (TC 1.A.69) family. Or2a subfamily. Interacts with Orco. Complexes exist early in the endomembrane system in olfactory sensory neurons (OSNs), coupling these complexes to the conserved ciliary trafficking pathway. Isoform B is expressed in the antenna.

The protein resides in the cell membrane. Odorant receptor which mediates acceptance or avoidance behavior, depending on its substrates. The odorant receptor repertoire encodes a large collection of odor stimuli that vary widely in identity, intensity, and duration. May form a complex with Orco to form odorant-sensing units, providing sensitive and prolonged odorant signaling and calcium permeability. This Drosophila melanogaster (Fruit fly) protein is Odorant receptor 46a, isoform B (Or46a).